The primary structure comprises 75 residues: uncharacterized protein (75 aa).

Its subcellular location is the plastid. It is found in the chloroplast. This is an uncharacterized protein from Calycanthus floridus var. glaucus (Eastern sweetshrub).